A 318-amino-acid chain; its full sequence is NADH-ubiquinone oxidoreductase chain 1 (318 aa).

Helical transmembrane passes span 2–22 (FLMN…FLTL), 37–57 (PNIV…KLFI), 69–89 (LMFT…WIPM), 100–120 (LGVL…LWSG), 136–156 (VAQT…VMMM), 171–191 (HMWL…STLA), 231–251 (IIMM…NPLF), 253–273 (ELFT…FLWV), and 293–313 (FLPL…LSAG).

It belongs to the complex I subunit 1 family. As to quaternary structure, core subunit of respiratory chain NADH dehydrogenase (Complex I) which is composed of 45 different subunits.

The protein localises to the mitochondrion inner membrane. The catalysed reaction is a ubiquinone + NADH + 5 H(+)(in) = a ubiquinol + NAD(+) + 4 H(+)(out). Core subunit of the mitochondrial membrane respiratory chain NADH dehydrogenase (Complex I) which catalyzes electron transfer from NADH through the respiratory chain, using ubiquinone as an electron acceptor. Essential for the catalytic activity and assembly of complex I. This is NADH-ubiquinone oxidoreductase chain 1 (MT-ND1) from Zaedyus pichiy (Pichi).